A 384-amino-acid chain; its full sequence is S-adenosylmethionine synthase (384 aa).

Position 15 (His15) interacts with ATP. Residue Asp17 participates in Mg(2+) binding. Residue Glu43 coordinates K(+). L-methionine is bound by residues Glu56 and Gln99. A flexible loop region spans residues 99–109 (QSADINQGVDR). Residues 164-166 (DAK), 230-231 (RF), Asp239, 245-246 (RK), Ala262, and Lys266 contribute to the ATP site. Asp239 contacts L-methionine. Residue Lys270 participates in L-methionine binding.

This sequence belongs to the AdoMet synthase family. As to quaternary structure, homotetramer; dimer of dimers. Requires Mg(2+) as cofactor. It depends on K(+) as a cofactor.

It localises to the cytoplasm. The catalysed reaction is L-methionine + ATP + H2O = S-adenosyl-L-methionine + phosphate + diphosphate. The protein operates within amino-acid biosynthesis; S-adenosyl-L-methionine biosynthesis; S-adenosyl-L-methionine from L-methionine: step 1/1. Its function is as follows. Catalyzes the formation of S-adenosylmethionine (AdoMet) from methionine and ATP. The overall synthetic reaction is composed of two sequential steps, AdoMet formation and the subsequent tripolyphosphate hydrolysis which occurs prior to release of AdoMet from the enzyme. This chain is S-adenosylmethionine synthase, found in Haemophilus influenzae (strain 86-028NP).